Reading from the N-terminus, the 2197-residue chain is Protein Ycf2 (2197 aa).

1539–1546 (GSIGTGRS) contributes to the ATP binding site.

The protein belongs to the Ycf2 family.

Its subcellular location is the plastid. The protein resides in the chloroplast stroma. In terms of biological role, probable ATPase of unknown function. Its presence in a non-photosynthetic plant (Epifagus virginiana) and experiments in tobacco indicate that it has an essential function which is probably not related to photosynthesis. This Ipomoea purpurea (Common morning glory) protein is Protein Ycf2.